Here is a 180-residue protein sequence, read N- to C-terminus: Large ribosomal subunit protein uL5 (180 aa).

It belongs to the universal ribosomal protein uL5 family. As to quaternary structure, part of the 50S ribosomal subunit; part of the 5S rRNA/L5/L18/L25 subcomplex. Contacts the 5S rRNA and the P site tRNA. Forms a bridge to the 30S subunit in the 70S ribosome.

In terms of biological role, this is one of the proteins that bind and probably mediate the attachment of the 5S RNA into the large ribosomal subunit, where it forms part of the central protuberance. In the 70S ribosome it contacts protein S13 of the 30S subunit (bridge B1b), connecting the 2 subunits; this bridge is implicated in subunit movement. Contacts the P site tRNA; the 5S rRNA and some of its associated proteins might help stabilize positioning of ribosome-bound tRNAs. This Streptococcus thermophilus (strain ATCC BAA-491 / LMD-9) protein is Large ribosomal subunit protein uL5.